Consider the following 522-residue polypeptide: Serine/threonine protein phosphatase 2A 59 kDa regulatory subunit B' gamma isoform (522 aa).

Positions 1–74 are disordered; it reads MIKQIFGKLP…SSTSSNRTNQ (74 aa). Positions 35-58 are enriched in low complexity; that stretch reads PNSGISSISKPSSKSSASNSNGAN. Positions 63 to 74 are enriched in polar residues; it reads APSSTSSNRTNQ.

The protein belongs to the phosphatase 2A regulatory subunit B56 family. PP2A consists of a common heteromeric enzyme, composed of a catalytic subunit (subunits C), a constant regulatory subunit (subunit A), and a variety of regulatory subunits such as subunits B (the R2/B/PR55/B55, R3/B''/PR72/PR130/PR59 and R5/B'/B56 families). Interacts with BRI1. Interacts with IGMT1 and IGMT4. Interacts with ACO3 in the cytosol. Expressed ubiquitously at low levels. Expressed in roots, emerging lateral roots, cotyledons, leaves, floral stalks and flowers.

Its subcellular location is the cytoplasm. The protein localises to the cytosol. The protein resides in the nucleus. Functionally, the B regulatory subunit may modulate substrate selectivity and catalytic activity, and may also direct the localization of the catalytic enzyme to a particular subcellular compartment. Required for the formation of the PP2A holoenzyme that negatively regulates brassinosteroid signaling by dephosphorylating and inactivating BRI1 in the cytoplasm. Seems to be functionally connected with CPR5 and may mediate the negative regulation of defense reactions and senescence under low irradiances. May contribute to the epigenetic regulation of defense gene expression. Involved in the control of methoxylation of indole glucosinolates and formation of 4-methoxy- indol-3-yl-methyl glucosinolate in leaves, through direct interaction with indole glucosinolate methyltransferases. Involved in growth regulation and stress signaling. Involved in the regulation of reactive oxygen species (ROS) signaling and maintenance of cellular ROS homeostasis. Required to control the level of ACO3 phosphorylation in the cytoplasm. Regulates hydrogen peroxide metabolism by controlling the abundance of AOX1A and AXO3/AOX1D in leaf mitochondria. May mediate dephosphorylation of CRT1 and promote the degradation of unfolded proteins in endoplasmic reticulum (ER). Involved in the regulation of flowering time by repressing FLC, the main flowering repressor gene. This Arabidopsis thaliana (Mouse-ear cress) protein is Serine/threonine protein phosphatase 2A 59 kDa regulatory subunit B' gamma isoform (B'GAMMA).